The primary structure comprises 103 residues: Co-chaperonin GroES (103 aa).

The protein belongs to the GroES chaperonin family. Heptamer of 7 subunits arranged in a ring. Interacts with the chaperonin GroEL.

It localises to the cytoplasm. Functionally, together with the chaperonin GroEL, plays an essential role in assisting protein folding. The GroEL-GroES system forms a nano-cage that allows encapsulation of the non-native substrate proteins and provides a physical environment optimized to promote and accelerate protein folding. GroES binds to the apical surface of the GroEL ring, thereby capping the opening of the GroEL channel. The polypeptide is Co-chaperonin GroES (Prochlorococcus marinus subsp. pastoris (strain CCMP1986 / NIES-2087 / MED4)).